Reading from the N-terminus, the 172-residue chain is Stellate protein CG33247 (172 aa).

The protein belongs to the casein kinase 2 subunit beta family. In terms of assembly, interacts in vitro with the casein kinase 2 alpha subunit (CkII-alpha). The relevance of such interaction is however unclear in vivo. Probably not expressed in wild-type flies. In males lacking the Y chromosome, it is testis-specific and constitutes the main component of star-shaped crystals.

Unknown. In males lacking the Y chromosome, its strong overexpression leads to the appearance of proteinaceous star-shaped crystals in the primary spermatocytes causing meiotic drive, possibly by interfering with normal casein kinase 2 activity. This chain is Stellate protein CG33247 (Ste:CG33247), found in Drosophila melanogaster (Fruit fly).